The sequence spans 805 residues: Serine/threonine-protein kinase fused (805 aa).

The region spanning Tyr4–Val254 is the Protein kinase domain. ATP-binding positions include Val10–Val18 and Lys33. Asp125 functions as the Proton acceptor in the catalytic mechanism. The segment at Lys269–Glu289 is disordered. Basic and acidic residues predominate over residues Ala278 to Asp287. Residues Ser422 and Ser429 each carry the phosphoserine modification. A compositionally biased stretch (basic and acidic residues) spans Ile447–Glu456. The segment at Ile447–Thr496 is disordered.

It belongs to the protein kinase superfamily. Ser/Thr protein kinase family. As to expression, expressed in all imaginal disks, higher level in wing disk.

It catalyses the reaction L-seryl-[protein] + ATP = O-phospho-L-seryl-[protein] + ADP + H(+). The catalysed reaction is L-threonyl-[protein] + ATP = O-phospho-L-threonyl-[protein] + ADP + H(+). In terms of biological role, probable serine/threonine-protein kinase; maternally required for correct patterning in the posterior part of each embryonic metamere. May be involved in control of cell division during metamorphosis and ovarian development. May interact with costal-2. The sequence is that of Serine/threonine-protein kinase fused (fu) from Drosophila melanogaster (Fruit fly).